Consider the following 286-residue polypeptide: uncharacterized protein (286 aa).

The AB hydrolase-1 domain maps to 26–268 (PLIILCHGFC…DACHYDIYEG (243 aa)).

It to E.coli YcjY.

This is an uncharacterized protein from Escherichia coli.